Consider the following 214-residue polypeptide: Peptidyl-tRNA hydrolase (214 aa).

Tyrosine 14 is a binding site for tRNA. Histidine 19 acts as the Proton acceptor in catalysis. TRNA contacts are provided by tyrosine 64, asparagine 66, and asparagine 113. The interval 184–214 (RINAPPPKPEKKRGSETSDPSAESADHAGGG) is disordered.

This sequence belongs to the PTH family. In terms of assembly, monomer.

It is found in the cytoplasm. The catalysed reaction is an N-acyl-L-alpha-aminoacyl-tRNA + H2O = an N-acyl-L-amino acid + a tRNA + H(+). Its function is as follows. Hydrolyzes ribosome-free peptidyl-tRNAs (with 1 or more amino acids incorporated), which drop off the ribosome during protein synthesis, or as a result of ribosome stalling. Catalyzes the release of premature peptidyl moieties from peptidyl-tRNA molecules trapped in stalled 50S ribosomal subunits, and thus maintains levels of free tRNAs and 50S ribosomes. The polypeptide is Peptidyl-tRNA hydrolase (Roseiflexus castenholzii (strain DSM 13941 / HLO8)).